The following is a 121-amino-acid chain: Small ribosomal subunit protein uS13 (121 aa).

The interval Gly94–Lys121 is disordered.

The protein belongs to the universal ribosomal protein uS13 family. In terms of assembly, part of the 30S ribosomal subunit. Forms a loose heterodimer with protein S19. Forms two bridges to the 50S subunit in the 70S ribosome.

Its function is as follows. Located at the top of the head of the 30S subunit, it contacts several helices of the 16S rRNA. In the 70S ribosome it contacts the 23S rRNA (bridge B1a) and protein L5 of the 50S subunit (bridge B1b), connecting the 2 subunits; these bridges are implicated in subunit movement. Contacts the tRNAs in the A and P-sites. The protein is Small ribosomal subunit protein uS13 of Ralstonia nicotianae (strain ATCC BAA-1114 / GMI1000) (Ralstonia solanacearum).